A 156-amino-acid chain; its full sequence is Crossover junction endodeoxyribonuclease RuvC (156 aa).

Catalysis depends on residues aspartate 7, glutamate 67, and aspartate 140. Positions 7, 67, and 140 each coordinate Mg(2+).

The protein belongs to the RuvC family. In terms of assembly, homodimer which binds Holliday junction (HJ) DNA. The HJ becomes 2-fold symmetrical on binding to RuvC with unstacked arms; it has a different conformation from HJ DNA in complex with RuvA. In the full resolvosome a probable DNA-RuvA(4)-RuvB(12)-RuvC(2) complex forms which resolves the HJ. Mg(2+) is required as a cofactor.

The protein resides in the cytoplasm. The catalysed reaction is Endonucleolytic cleavage at a junction such as a reciprocal single-stranded crossover between two homologous DNA duplexes (Holliday junction).. In terms of biological role, the RuvA-RuvB-RuvC complex processes Holliday junction (HJ) DNA during genetic recombination and DNA repair. Endonuclease that resolves HJ intermediates. Cleaves cruciform DNA by making single-stranded nicks across the HJ at symmetrical positions within the homologous arms, yielding a 5'-phosphate and a 3'-hydroxyl group; requires a central core of homology in the junction. The consensus cleavage sequence is 5'-(A/T)TT(C/G)-3'. Cleavage occurs on the 3'-side of the TT dinucleotide at the point of strand exchange. HJ branch migration catalyzed by RuvA-RuvB allows RuvC to scan DNA until it finds its consensus sequence, where it cleaves and resolves the cruciform DNA. This is Crossover junction endodeoxyribonuclease RuvC from Rickettsia felis (strain ATCC VR-1525 / URRWXCal2) (Rickettsia azadi).